We begin with the raw amino-acid sequence, 213 residues long: NADH-quinone oxidoreductase subunit C (213 aa).

This sequence belongs to the complex I 30 kDa subunit family. NDH-1 is composed of 14 different subunits. Subunits NuoB, C, D, E, F, and G constitute the peripheral sector of the complex.

The protein resides in the cell inner membrane. The catalysed reaction is a quinone + NADH + 5 H(+)(in) = a quinol + NAD(+) + 4 H(+)(out). Its function is as follows. NDH-1 shuttles electrons from NADH, via FMN and iron-sulfur (Fe-S) centers, to quinones in the respiratory chain. The immediate electron acceptor for the enzyme in this species is believed to be ubiquinone. Couples the redox reaction to proton translocation (for every two electrons transferred, four hydrogen ions are translocated across the cytoplasmic membrane), and thus conserves the redox energy in a proton gradient. This is NADH-quinone oxidoreductase subunit C from Rhodospirillum rubrum (strain ATCC 11170 / ATH 1.1.1 / DSM 467 / LMG 4362 / NCIMB 8255 / S1).